A 294-amino-acid chain; its full sequence is ATP synthase gamma chain (294 aa).

The protein belongs to the ATPase gamma chain family. F-type ATPases have 2 components, CF(1) - the catalytic core - and CF(0) - the membrane proton channel. CF(1) has five subunits: alpha(3), beta(3), gamma(1), delta(1), epsilon(1). CF(0) has three main subunits: a, b and c.

Its subcellular location is the cell inner membrane. In terms of biological role, produces ATP from ADP in the presence of a proton gradient across the membrane. The gamma chain is believed to be important in regulating ATPase activity and the flow of protons through the CF(0) complex. This Campylobacter jejuni subsp. jejuni serotype O:2 (strain ATCC 700819 / NCTC 11168) protein is ATP synthase gamma chain.